A 270-amino-acid chain; its full sequence is Short chain dehydrogenase/reductase dpfgG (270 aa).

NADP(+) is bound by residues isoleucine 18, aspartate 69, asparagine 96, lysine 130, lysine 171, isoleucine 200, and asparagine 204. Lysine 171 (lowers pKa of active site Tyr) is an active-site residue.

This sequence belongs to the short-chain dehydrogenases/reductases (SDR) family.

Its pathway is secondary metabolite biosynthesis; terpenoid biosynthesis. Functionally, short chain dehydrogenase/reductase; part of the gene cluster that mediates the biosynthesis of diterpenoid pyrones. The first step of the pathway is the synthesis of the alpha-pyrone moiety by the polyketide synthase dpfgA via condensation of one acetyl-CoA starter unit with 3 malonyl-CoA units and 2 methylations. The alpha-pyrone is then combined with geranylgeranyl pyrophosphate (GGPP) formed by the GGPP synthase dpfgD through the action of the prenyltransferase dpfgC to yield a linear alpha-pyrone diterpenoid. Subsequent steps in the diterpenoid pyrone biosynthetic pathway involve the decalin core formation, which is initiated by the epoxidation of the C10-C11 olefin by the FAD-dependent oxidoreductase dpfgE, and is followed by a cyclization cascade catalyzed by the terpene cyclase dpfgB. The short chain dehydrogenase/reductase dpfgG then oxidizes the 8S hydroxy group to a ketone and the short chain dehydrogenase/reductase dpfgH reduces the ketone to the 8R hydroxy group to yield higginsianin B. Higginsianin B is further methylated by the methyltransferase dpfgI to produce the intermediate named FDDP B. The cytochrome P450 monooxygenase dfgpJ then catalyzes a three-step oxidation at C-27 to generate a carboxylic acid as well as C-26 hydroxylation. Finally, methyltransferase dpfgK methylates the carboxylic acid generated by dpfgJ, yielding the final diterpenoid pyrones from the pathway which were named FDDP D and FDDP E. The sequence is that of Short chain dehydrogenase/reductase dpfgG from Gibberella zeae (strain ATCC MYA-4620 / CBS 123657 / FGSC 9075 / NRRL 31084 / PH-1) (Wheat head blight fungus).